The sequence spans 382 residues: Mannitol-1-phosphate 5-dehydrogenase (382 aa).

3-14 serves as a coordination point for NAD(+); sequence ALHFGAGNIGRG.

This sequence belongs to the mannitol dehydrogenase family.

The enzyme catalyses D-mannitol 1-phosphate + NAD(+) = beta-D-fructose 6-phosphate + NADH + H(+). This is Mannitol-1-phosphate 5-dehydrogenase from Salmonella typhi.